The chain runs to 273 residues: Torsin-1A (273 aa).

The interaction with SNAPIN stretch occupies residues 45-205 (KPKKPLTLSL…VSVFNNKNSG (161 aa)). 56–63 (GWTGTGKN) contacts ATP. N-linked (GlcNAc...) asparagine glycans are attached at residues Asn97 and Asn112.

It belongs to the ClpA/ClpB family. Torsin subfamily. Homohexamer. Interacts with TOR1B; the interaction may be specific of neural tissues. Interacts (ATP-bound) with TOR1AIP1 and TOR1AIP2; the interactions induce ATPase activity. Interacts with KLHL14; preferentially when ATP-free. Interacts with KLC1 (via TPR repeats); the interaction associates TOR1A with the kinesin oligomeric complex. Interacts with COPS4; the interaction associates TOR1A with the CSN complex. Interacts with SNAPIN; the interaction is direct and associates SNAPIN with the CSN complex. Interacts with STON2. Interacts (ATP-bound) with SYNE3 (via KASH domain); the interaction is required for SYNE3 nuclear envelope localization. Interacts with VIM; the interaction associates TOR1A with the cytoskeleton. Interacts with PLEC. Interacts (ATP-bound) with SLC6A3; regulates SLC6A3 transport to the plasma membrane. In terms of processing, N-glycosylated.

Its subcellular location is the endoplasmic reticulum lumen. It localises to the nucleus membrane. The protein localises to the cell projection. The protein resides in the growth cone. It is found in the cytoplasmic vesicle membrane. Its subcellular location is the synapse. It localises to the synaptosome. The protein localises to the cytoplasm. The protein resides in the cytoskeleton. The enzyme catalyses ATP + H2O = ADP + phosphate + H(+). Its function is as follows. Protein with chaperone functions important for the control of protein folding, processing, stability and localization as well as for the reduction of misfolded protein aggregates. Involved in the regulation of synaptic vesicle recycling, controls STON2 protein stability in collaboration with the COP9 signalosome complex (CSN). In the nucleus, may link the cytoskeleton with the nuclear envelope, this mechanism seems to be crucial for the control of nuclear polarity, cell movement and, specifically in neurons, nuclear envelope integrity. Participates in the cellular trafficking and may regulate the subcellular location of multipass membrane proteins such as the dopamine transporter SLC6A3, leading to the modulation of dopamine neurotransmission. In the endoplasmic reticulum, plays a role in the quality control of protein folding by increasing clearance of misfolded proteins such as SGCE variants or holding them in an intermediate state for proper refolding. May have a redundant function with TOR1B in non-neural tissues. This is Torsin-1A (TOR1A) from Cricetus cricetus (Black-bellied hamster).